We begin with the raw amino-acid sequence, 410 residues long: Adenosylhomocysteinase (410 aa).

Residues D117 and E142 each contribute to the substrate site. 143 to 145 (TTT) lines the NAD(+) pocket. Positions 172 and 176 each coordinate substrate. Residues N177, 206–211 (GYGYCG), E229, 285–287 (AGH), and N332 contribute to the NAD(+) site.

It belongs to the adenosylhomocysteinase family. The cofactor is NAD(+).

The protein resides in the cytoplasm. It catalyses the reaction S-adenosyl-L-homocysteine + H2O = L-homocysteine + adenosine. It functions in the pathway amino-acid biosynthesis; L-homocysteine biosynthesis; L-homocysteine from S-adenosyl-L-homocysteine: step 1/1. Its function is as follows. May play a key role in the regulation of the intracellular concentration of adenosylhomocysteine. This is Adenosylhomocysteinase from Thermoplasma volcanium (strain ATCC 51530 / DSM 4299 / JCM 9571 / NBRC 15438 / GSS1).